The sequence spans 392 residues: L-rhamnonate dehydratase (392 aa).

2 residues coordinate substrate: histidine 22 and arginine 48. The Mg(2+) site is built by aspartate 214, glutamate 240, and glutamate 268. The Proton acceptor role is filled by histidine 318. A substrate-binding site is contributed by glutamate 338.

The protein belongs to the mandelate racemase/muconate lactonizing enzyme family. RhamD subfamily. As to quaternary structure, homooctamer; tetramer of dimers. Mg(2+) serves as cofactor.

It catalyses the reaction L-rhamnonate = 2-dehydro-3-deoxy-L-rhamnonate + H2O. Its function is as follows. Catalyzes the dehydration of L-rhamnonate to 2-keto-3-deoxy-L-rhamnonate (KDR). This is L-rhamnonate dehydratase from Burkholderia ambifaria (strain ATCC BAA-244 / DSM 16087 / CCUG 44356 / LMG 19182 / AMMD) (Burkholderia cepacia (strain AMMD)).